The primary structure comprises 173 residues: ATP-dependent protease subunit HslV (173 aa).

The active site involves threonine 2. Glycine 157, cysteine 160, and threonine 163 together coordinate Na(+).

It belongs to the peptidase T1B family. HslV subfamily. In terms of assembly, a double ring-shaped homohexamer of HslV is capped on each side by a ring-shaped HslU homohexamer. The assembly of the HslU/HslV complex is dependent on binding of ATP.

The protein resides in the cytoplasm. It catalyses the reaction ATP-dependent cleavage of peptide bonds with broad specificity.. Its activity is regulated as follows. Allosterically activated by HslU binding. Protease subunit of a proteasome-like degradation complex believed to be a general protein degrading machinery. This Nitrosomonas eutropha (strain DSM 101675 / C91 / Nm57) protein is ATP-dependent protease subunit HslV.